Consider the following 429-residue polypeptide: tRNA-2-methylthio-N(6)-dimethylallyladenosine synthase (429 aa).

The 110-residue stretch at M1–K110 folds into the MTTase N-terminal domain. Positions 10, 46, 75, 146, 150, and 153 each coordinate [4Fe-4S] cluster. One can recognise a Radical SAM core domain in the interval R132–L364. Residues E366–K427 enclose the TRAM domain.

This sequence belongs to the methylthiotransferase family. MiaB subfamily. Monomer. Requires [4Fe-4S] cluster as cofactor.

The protein localises to the cytoplasm. It carries out the reaction N(6)-dimethylallyladenosine(37) in tRNA + (sulfur carrier)-SH + AH2 + 2 S-adenosyl-L-methionine = 2-methylsulfanyl-N(6)-dimethylallyladenosine(37) in tRNA + (sulfur carrier)-H + 5'-deoxyadenosine + L-methionine + A + S-adenosyl-L-homocysteine + 2 H(+). Catalyzes the methylthiolation of N6-(dimethylallyl)adenosine (i(6)A), leading to the formation of 2-methylthio-N6-(dimethylallyl)adenosine (ms(2)i(6)A) at position 37 in tRNAs that read codons beginning with uridine. The protein is tRNA-2-methylthio-N(6)-dimethylallyladenosine synthase of Thermosipho africanus (strain TCF52B).